A 467-amino-acid chain; its full sequence is Glutamate--tRNA ligase (467 aa).

Residues 9–19 (PSPTGFLHIGG) carry the 'HIGH' region motif. Positions 250 to 254 (KLSKR) match the 'KMSKS' region motif. An ATP-binding site is contributed by K253.

The protein belongs to the class-I aminoacyl-tRNA synthetase family. Glutamate--tRNA ligase type 1 subfamily. Monomer.

The protein resides in the cytoplasm. It catalyses the reaction tRNA(Glu) + L-glutamate + ATP = L-glutamyl-tRNA(Glu) + AMP + diphosphate. Functionally, catalyzes the attachment of glutamate to tRNA(Glu) in a two-step reaction: glutamate is first activated by ATP to form Glu-AMP and then transferred to the acceptor end of tRNA(Glu). This is Glutamate--tRNA ligase from Mesomycoplasma hyopneumoniae (strain 232) (Mycoplasma hyopneumoniae).